A 282-amino-acid chain; its full sequence is Bifunctional protein FolD (282 aa).

NADP(+) is bound by residues 165–167, serine 190, and threonine 231; that span reads GRS.

The protein belongs to the tetrahydrofolate dehydrogenase/cyclohydrolase family. Homodimer.

The enzyme catalyses (6R)-5,10-methylene-5,6,7,8-tetrahydrofolate + NADP(+) = (6R)-5,10-methenyltetrahydrofolate + NADPH. The catalysed reaction is (6R)-5,10-methenyltetrahydrofolate + H2O = (6R)-10-formyltetrahydrofolate + H(+). It functions in the pathway one-carbon metabolism; tetrahydrofolate interconversion. Its function is as follows. Catalyzes the oxidation of 5,10-methylenetetrahydrofolate to 5,10-methenyltetrahydrofolate and then the hydrolysis of 5,10-methenyltetrahydrofolate to 10-formyltetrahydrofolate. This Clostridium beijerinckii (strain ATCC 51743 / NCIMB 8052) (Clostridium acetobutylicum) protein is Bifunctional protein FolD.